Consider the following 309-residue polypeptide: tRNA dimethylallyltransferase (309 aa).

Residue 9–16 (GPTAVGKT) coordinates ATP. 11-16 (TAVGKT) provides a ligand contact to substrate. Positions 34 to 37 (DSMQ) are interaction with substrate tRNA.

This sequence belongs to the IPP transferase family. Monomer. Mg(2+) is required as a cofactor.

The enzyme catalyses adenosine(37) in tRNA + dimethylallyl diphosphate = N(6)-dimethylallyladenosine(37) in tRNA + diphosphate. Its function is as follows. Catalyzes the transfer of a dimethylallyl group onto the adenine at position 37 in tRNAs that read codons beginning with uridine, leading to the formation of N6-(dimethylallyl)adenosine (i(6)A). The polypeptide is tRNA dimethylallyltransferase (Clostridium kluyveri (strain NBRC 12016)).